A 526-amino-acid chain; its full sequence is Cholesterol side-chain cleavage enzyme, mitochondrial (526 aa).

Residues 1–36 (MLAKGLSLRSVLVKGCQPFLSPTWQGPVLSTGKGAG) constitute a mitochondrion transit peptide. The span at 30–41 (STGKGAGTSTSS) shows a compositional bias: low complexity. The interval 30–49 (STGKGAGTSTSSPRSFNEIP) is disordered. C458 contacts heme.

The protein belongs to the cytochrome P450 family. As to quaternary structure, interacts with FDX1/adrenodoxin. Requires heme as cofactor.

It localises to the mitochondrion inner membrane. It carries out the reaction 6 reduced [adrenodoxin] + cholesterol + 3 O2 + 6 H(+) = 4-methylpentanal + pregnenolone + 6 oxidized [adrenodoxin] + 4 H2O. The enzyme catalyses 2 reduced [adrenodoxin] + cholesterol + O2 + 2 H(+) = (22R)-hydroxycholesterol + 2 oxidized [adrenodoxin] + H2O. The catalysed reaction is (22R)-hydroxycholesterol + 2 reduced [adrenodoxin] + O2 + 2 H(+) = (20R,22R)-20,22-dihydroxycholesterol + 2 oxidized [adrenodoxin] + H2O. It catalyses the reaction (20R,22R)-20,22-dihydroxycholesterol + 2 reduced [adrenodoxin] + O2 + 2 H(+) = 4-methylpentanal + pregnenolone + 2 oxidized [adrenodoxin] + 2 H2O. Its pathway is lipid metabolism; C21-steroid hormone metabolism. The protein operates within steroid metabolism; cholesterol metabolism. A cytochrome P450 monooxygenase that catalyzes the side-chain hydroxylation and cleavage of cholesterol to pregnenolone, the precursor of most steroid hormones. Catalyzes three sequential oxidation reactions of cholesterol, namely the hydroxylation at C22 followed with the hydroxylation at C20 to yield 20R,22R-hydroxycholesterol that is further cleaved between C20 and C22 to yield the C21-steroid pregnenolone and 4-methylpentanal. Mechanistically, uses molecular oxygen inserting one oxygen atom into a substrate and reducing the second into a water molecule. Two electrons are provided by NADPH via a two-protein mitochondrial transfer system comprising flavoprotein FDXR (adrenodoxin/ferredoxin reductase) and nonheme iron-sulfur protein FDX1 or FDX2 (adrenodoxin/ferredoxin). The polypeptide is Cholesterol side-chain cleavage enzyme, mitochondrial (Mus musculus (Mouse)).